The following is a 328-amino-acid chain: Formimidoylglutamase (328 aa).

6 residues coordinate Mn(2+): histidine 133, aspartate 159, histidine 161, aspartate 163, aspartate 253, and aspartate 255.

This sequence belongs to the arginase family. It depends on Mn(2+) as a cofactor.

It carries out the reaction N-formimidoyl-L-glutamate + H2O = formamide + L-glutamate. It participates in amino-acid degradation; L-histidine degradation into L-glutamate; L-glutamate from N-formimidoyl-L-glutamate (hydrolase route): step 1/1. Functionally, catalyzes the conversion of N-formimidoyl-L-glutamate to L-glutamate and formamide. This chain is Formimidoylglutamase, found in Streptococcus pyogenes serotype M18 (strain MGAS8232).